The primary structure comprises 138 residues: MRTLWIVAVCLIGVEGNLYQFGEMINQKTGNFGLLSYVYYGCYCGWGGKGKPQDATDRCCFVHDCCYGRVKGCDPKTATYSYSFENGDIVCGGDDPCLRAVCECDRVAAICFRENMNTYDKKYMLYSIFDCKEESDQC.

Residues 1–16 (MRTLWIVAVCLIGVEG) form the signal peptide. 7 disulfides stabilise this stretch: C42–C131, C44–C60, C59–C111, C65–C138, C66–C104, C73–C97, and C91–C102. Y43, G45, and G47 together coordinate Ca(2+). H63 is a catalytic residue. D64 lines the Ca(2+) pocket. Residue D105 is part of the active site.

This sequence belongs to the phospholipase A2 family. Group II subfamily. D49 sub-subfamily. The cofactor is Ca(2+). As to expression, expressed by the venom gland.

Its subcellular location is the secreted. It catalyses the reaction a 1,2-diacyl-sn-glycero-3-phosphocholine + H2O = a 1-acyl-sn-glycero-3-phosphocholine + a fatty acid + H(+). In terms of biological role, exhibits high hydrolytic activities and shows strong preference for the anionic micelles (dPPC with deoxycholate) to the zwitterionic micelles (dPPC with Triton X-100). PLA2 catalyzes the calcium-dependent hydrolysis of the 2-acyl groups in 3-sn-phosphoglycerides. In Daboia siamensis (Eastern Russel's viper), this protein is Acidic phospholipase A2 DsM-a2/DsM-a2'.